A 363-amino-acid chain; its full sequence is Protein-arginine kinase (363 aa).

In terms of domain architecture, Phosphagen kinase C-terminal spans 24–255; that stretch reads IVLSSRIRLA…EQLIAQERAA (232 aa). Residues 27 to 31, His92, Arg126, 177 to 181, and 208 to 213 contribute to the ATP site; these read SSRIR, RASVM, and RGTYGE. The RDXXRA motif of the pArg binding pocket involved in allosteric regulation signature appears at 338 to 343; the sequence is RDVRRA.

This sequence belongs to the ATP:guanido phosphotransferase family. In terms of assembly, homodimer. Dimerization is important for full catalytic activity.

The enzyme catalyses L-arginyl-[protein] + ATP = N(omega)-phospho-L-arginyl-[protein] + ADP + H(+). Appears to be allosterically activated by the binding of pArg-containing polypeptides to the pArg-binding pocket localized in the C-terminal domain of McsB. Functionally, catalyzes the specific phosphorylation of arginine residues in a large number of proteins. Is part of the bacterial stress response system, where it is involved in regulating the global heat shock repressor CtsR; phosphorylates arginine residues in the winged helix-turn-helix domain of CtsR, thereby preventing its binding to DNA and consequently inducing the expression of repressed genes. Protein arginine phosphorylation has a physiologically important role and is involved in the regulation of many critical cellular processes, such as protein homeostasis, motility, competence, and stringent and stress responses, by regulating gene expression and protein activity. Acts exclusively on Arg residues, since it cannot phosphorylate Tyr, Ser, Thr, His, Asp and Lys. Has no free arginine kinase activity. The protein is Protein-arginine kinase of Geobacillus stearothermophilus (Bacillus stearothermophilus).